The primary structure comprises 503 residues: Arabinose import ATP-binding protein AraG (503 aa).

ABC transporter domains follow at residues leucine 5 to arginine 240 and leucine 253 to glycine 497. An ATP-binding site is contributed by glycine 37–serine 44.

The protein belongs to the ABC transporter superfamily. Arabinose importer (TC 3.A.1.2.2) family. In terms of assembly, the complex is composed of two ATP-binding proteins (AraG), two transmembrane proteins (AraH) and a solute-binding protein (AraF).

It is found in the cell inner membrane. The catalysed reaction is L-arabinose(out) + ATP + H2O = L-arabinose(in) + ADP + phosphate + H(+). In terms of biological role, part of the ABC transporter complex AraFGH involved in arabinose import. Responsible for energy coupling to the transport system. The protein is Arabinose import ATP-binding protein AraG of Burkholderia pseudomallei (strain 1710b).